The chain runs to 345 residues: uncharacterized protein (345 aa).

A domain (TBDR plug) is located at residue methionine 1. The TBDR beta-barrel domain maps to 1 to 345 (MDLGPIYNTR…EVILNTKIEF (345 aa)). The TonB C-terminal box motif lies at 328–345 (PVALGYAREVILNTKIEF).

The protein belongs to the TonB-dependent receptor family.

Its subcellular location is the cell outer membrane. This is an uncharacterized protein from Haemophilus influenzae (strain ATCC 51907 / DSM 11121 / KW20 / Rd).